A 474-amino-acid chain; its full sequence is 3-isopropylmalate dehydratase large subunit (474 aa).

Positions 353, 414, and 417 each coordinate [4Fe-4S] cluster.

It belongs to the aconitase/IPM isomerase family. LeuC type 1 subfamily. Heterodimer of LeuC and LeuD. [4Fe-4S] cluster is required as a cofactor.

The catalysed reaction is (2R,3S)-3-isopropylmalate = (2S)-2-isopropylmalate. It participates in amino-acid biosynthesis; L-leucine biosynthesis; L-leucine from 3-methyl-2-oxobutanoate: step 2/4. Catalyzes the isomerization between 2-isopropylmalate and 3-isopropylmalate, via the formation of 2-isopropylmaleate. In Xylella fastidiosa (strain M23), this protein is 3-isopropylmalate dehydratase large subunit.